Consider the following 259-residue polypeptide: Ditrans,polycis-undecaprenyl-diphosphate synthase ((2E,6E)-farnesyl-diphosphate specific) (259 aa).

Residue Asp-32 is part of the active site. Mg(2+) is bound at residue Asp-32. Residues Gly-33–Arg-36, Trp-37, Arg-45, His-49, and Ser-77–Glu-79 each bind substrate. The Proton acceptor role is filled by Asn-80. Substrate-binding positions include Trp-81, Arg-83, Arg-203, and Arg-209–Ser-211. Residue Glu-222 coordinates Mg(2+).

It belongs to the UPP synthase family. In terms of assembly, homodimer. The cofactor is Mg(2+).

The catalysed reaction is 8 isopentenyl diphosphate + (2E,6E)-farnesyl diphosphate = di-trans,octa-cis-undecaprenyl diphosphate + 8 diphosphate. Catalyzes the sequential condensation of isopentenyl diphosphate (IPP) with (2E,6E)-farnesyl diphosphate (E,E-FPP) to yield (2Z,6Z,10Z,14Z,18Z,22Z,26Z,30Z,34E,38E)-undecaprenyl diphosphate (di-trans,octa-cis-UPP). UPP is the precursor of glycosyl carrier lipid in the biosynthesis of bacterial cell wall polysaccharide components such as peptidoglycan and lipopolysaccharide. This is Ditrans,polycis-undecaprenyl-diphosphate synthase ((2E,6E)-farnesyl-diphosphate specific) (uppS) from Lactiplantibacillus plantarum (strain ATCC BAA-793 / NCIMB 8826 / WCFS1) (Lactobacillus plantarum).